A 368-amino-acid chain; its full sequence is BTB/POZ and TAZ domain-containing protein 5 (368 aa).

The tract at residues 1 to 25 (MENMDDFSPENVLAPPPPPPPMKKS) is disordered. One can recognise a BTB domain in the interval 55-123 (ADVLIHTDDN…LYSSCYEKQD (69 aa)). The TAZ-type zinc finger occupies 233-324 (QTYTQLYEAM…SEQCKVPLCS (92 aa)). The segment at 335–358 (RKDEKRWKLLVRNVLSTKRIGGSP) is caM-binding.

Interacts with CUL3A. Preferentially expressed in young leaves, roots and stems.

The protein resides in the cytoplasm. The protein operates within protein modification; protein ubiquitination. Its function is as follows. May act as a substrate-specific adapter of an E3 ubiquitin-protein ligase complex (CUL3-RBX1-BTB) which mediates the ubiquitination and subsequent proteasomal degradation of target proteins. The polypeptide is BTB/POZ and TAZ domain-containing protein 5 (BT5) (Arabidopsis thaliana (Mouse-ear cress)).